Reading from the N-terminus, the 319-residue chain is Methionyl-tRNA formyltransferase (319 aa).

115-118 (SLLP) serves as a coordination point for (6S)-5,6,7,8-tetrahydrofolate.

This sequence belongs to the Fmt family.

The enzyme catalyses L-methionyl-tRNA(fMet) + (6R)-10-formyltetrahydrofolate = N-formyl-L-methionyl-tRNA(fMet) + (6S)-5,6,7,8-tetrahydrofolate + H(+). Attaches a formyl group to the free amino group of methionyl-tRNA(fMet). The formyl group appears to play a dual role in the initiator identity of N-formylmethionyl-tRNA by promoting its recognition by IF2 and preventing the misappropriation of this tRNA by the elongation apparatus. In Lactococcus lactis subsp. lactis (strain IL1403) (Streptococcus lactis), this protein is Methionyl-tRNA formyltransferase.